Reading from the N-terminus, the 338-residue chain is Eukaryotic translation initiation factor 3 subunit H (338 aa).

The region spanning 22-154 is the MPN domain; the sequence is VQCDGLAVMK…LKAYRLTPQA (133 aa).

It belongs to the eIF-3 subunit H family. Component of the eukaryotic translation initiation factor 3 (eIF-3) complex. The eIF-3 complex interacts with pix. Interacts with mxt.

It is found in the cytoplasm. Its function is as follows. Component of the eukaryotic translation initiation factor 3 (eIF-3) complex, which is involved in protein synthesis of a specialized repertoire of mRNAs and, together with other initiation factors, stimulates binding of mRNA and methionyl-tRNAi to the 40S ribosome. The eIF-3 complex specifically targets and initiates translation of a subset of mRNAs involved in cell proliferation. The sequence is that of Eukaryotic translation initiation factor 3 subunit H from Drosophila sechellia (Fruit fly).